The following is a 121-amino-acid chain: Large ribosomal subunit protein uL14 (121 aa).

This sequence belongs to the universal ribosomal protein uL14 family. Part of the 50S ribosomal subunit. Forms a cluster with proteins L3 and L19. In the 70S ribosome, L14 and L19 interact and together make contacts with the 16S rRNA in bridges B5 and B8.

Binds to 23S rRNA. Forms part of two intersubunit bridges in the 70S ribosome. This is Large ribosomal subunit protein uL14 from Aquifex aeolicus (strain VF5).